Consider the following 267-residue polypeptide: Glutamate 5-kinase (267 aa).

Lys14 is a binding site for ATP. Substrate contacts are provided by Ser54, Asp141, and Asn157. Residues 177–178 (SD) and 219–225 (TGGMMSK) each bind ATP.

Belongs to the glutamate 5-kinase family.

Its subcellular location is the cytoplasm. It catalyses the reaction L-glutamate + ATP = L-glutamyl 5-phosphate + ADP. It participates in amino-acid biosynthesis; L-proline biosynthesis; L-glutamate 5-semialdehyde from L-glutamate: step 1/2. Catalyzes the transfer of a phosphate group to glutamate to form L-glutamate 5-phosphate. The sequence is that of Glutamate 5-kinase from Streptococcus thermophilus.